A 473-amino-acid chain; its full sequence is Cysteine--tRNA ligase (473 aa).

Cys-28 lines the Zn(2+) pocket. The 'HIGH' region motif lies at 30 to 40 (MTVYDFCHIGH). Cys-212, His-237, and Glu-241 together coordinate Zn(2+). The 'KMSKS' region motif lies at 277 to 281 (KMSKS). Lys-280 provides a ligand contact to ATP.

It belongs to the class-I aminoacyl-tRNA synthetase family. In terms of assembly, monomer. Zn(2+) is required as a cofactor.

It is found in the cytoplasm. It carries out the reaction tRNA(Cys) + L-cysteine + ATP = L-cysteinyl-tRNA(Cys) + AMP + diphosphate. The sequence is that of Cysteine--tRNA ligase from Polynucleobacter necessarius subsp. necessarius (strain STIR1).